The sequence spans 509 residues: MGGSARARWVAVGLGVVGLLCAVLGVVMILVMPSLIKQQVLKNVRIDPSSLSFAMWKEIPVPFYLSVYFFEVVNPSEILKGEKPVVRERGPYVYREFRHKANITFNDNDTVSFVEHRSLHFQPDRSHGSESDYIILPNILVLGGAVMMESKSAGLKLMMTLGLATLGQRAFMNRTVGEILWGYEDPFVNFINKYLPDMFPIKGKFGLFVEMNNSDSGLFTVFTGVQNFSKIHLVDRWNGLSKVNYWHSEQCNMINGTSGQMWAPFMTPQSSLEFFSPEACRSMKLTYHDSGVFEGIPTYRFTAPKTLFANGSVYPPNEGFCPCLESGIQNVSTCRFGAPLFLSHPHFYNADPVLSEAVLGLNPDPREHSLFLDIHPVTGIPMNCSVKLQISLYIKAVKGIGQTGKIEPVVLPLLWFEQSGAMGGEPLNTFYTQLVLMPQVLQYVQYVLLGLGGLLLLVPVIYQLRSQEKCFLFWSGSKKGSQDKEAIQAYSESLMSPAAKGTVLQEAKL.

Over 1–11 the chain is Cytoplasmic; the sequence is MGGSARARWVA. A helical membrane pass occupies residues 12–32; sequence VGLGVVGLLCAVLGVVMILVM. The Extracellular portion of the chain corresponds to 33–440; sequence PSLIKQQVLK…YTQLVLMPQV (408 aa). Residues Asn-102, Asn-108, Asn-173, Asn-212, Asn-227, Asn-255, Asn-310, Asn-330, and Asn-383 are each glycosylated (N-linked (GlcNAc...) asparagine). Residues Cys-251 and Cys-384 are joined by a disulfide bond. The helical transmembrane segment at 441–461 threads the bilayer; the sequence is LQYVQYVLLGLGGLLLLVPVI. Residues 462–509 are Cytoplasmic-facing; it reads YQLRSQEKCFLFWSGSKKGSQDKEAIQAYSESLMSPAAKGTVLQEAKL.

Belongs to the CD36 family. Post-translationally, N-glycosylated. The six cysteines of the extracellular domain are all involved in intramolecular disulfide bonds.

It is found in the cell membrane. It localises to the membrane. The protein resides in the caveola. In terms of biological role, receptor for different ligands such as phospholipids, cholesterol ester, lipoproteins, phosphatidylserine and apoptotic cells. Receptor for HDL, mediating selective uptake of cholesteryl ether and HDL-dependent cholesterol efflux. Also facilitates the flux of free and esterified cholesterol between the cell surface and apoB-containing lipoproteins and modified lipoproteins, although less efficiently than HDL. May be involved in the phagocytosis of apoptotic cells, via its phosphatidylserine binding activity. The polypeptide is Scavenger receptor class B member 1 (SCARB1) (Cricetulus griseus (Chinese hamster)).